The following is a 667-amino-acid chain: WD repeat-containing protein 48 homolog (667 aa).

8 WD repeats span residues 26–65 (QHRN…NEKY), 71–110 (HHND…CMST), 113–152 (THRD…ALTA), 164–203 (GSKD…RSMK), 206–245 (GHTE…CVQT), 248–287 (VHKE…NKML), 290–329 (EEQA…RCTL), and 350–389 (KGGA…KKEQ). The segment at 591–615 (ETTPSGGNANNSLQNSQSDANSEGS) is disordered.

It belongs to the WD repeat WDR48 family. As to quaternary structure, catalytic component of the Usp12-46 deubiquitylase complex consisting of Usp12-46, Wdr20 and Uaf1; regulatory subunit that, together wtih Wdr20, stabilizes Usp12-46. The Usp12-46 deubiquitylase complex associates with arr/arrow; the interaction leads to deubiquitination and stabilization of arr/arrow.

Regulatory component of the Usp12-46 deubiquitylase complex. activates deubiquitination by increasing the catalytic turnover without increasing the affinity of deubiquitinating enzymes for the substrate. The complex deubiquitylates the wg/wingless-signaling receptor arr/arrow, which stabilizes the receptor and increases its concentration at the cell surface; this enhances the sensitivity of cells to wg/wingless-signal stimulation. This increases the amplitude and spatial range of the signaling response to the wg/wingless morphogen gradient, facilitating the precise concentration-dependent regulation of its target genes. Together with Wdr20 and Usp12-46 required for wg/wingless-mediated signaling in the wing imaginal disc and for wg/wingless-dependent regulation of intestinal stem cell proliferation. The polypeptide is WD repeat-containing protein 48 homolog (Drosophila ananassae (Fruit fly)).